Here is a 394-residue protein sequence, read N- to C-terminus: Protein-glutamate methylesterase/protein-glutamine glutaminase (394 aa).

The disordered stretch occupies residues 1-24 (MSDGFGRPPPPAPAGHPTGAAGGD). A compositionally biased stretch (low complexity) spans 15–24 (GHPTGAAGGD). Residues 27–145 (RVMVVDDSAV…EIGGADAFKR (119 aa)) form the Response regulatory domain. 4-aspartylphosphate is present on D78. A CheB-type methylesterase domain is found at 191–393 (PAPAVGSVGQ…PYIRKFASRA (203 aa)). Catalysis depends on residues S211, H238, and D335.

This sequence belongs to the CheB family. Phosphorylated by CheA. Phosphorylation of the N-terminal regulatory domain activates the methylesterase activity.

It localises to the cytoplasm. The enzyme catalyses [protein]-L-glutamate 5-O-methyl ester + H2O = L-glutamyl-[protein] + methanol + H(+). It catalyses the reaction L-glutaminyl-[protein] + H2O = L-glutamyl-[protein] + NH4(+). Its function is as follows. Involved in chemotaxis. Part of a chemotaxis signal transduction system that modulates chemotaxis in response to various stimuli. Catalyzes the demethylation of specific methylglutamate residues introduced into the chemoreceptors (methyl-accepting chemotaxis proteins or MCP) by CheR. Also mediates the irreversible deamidation of specific glutamine residues to glutamic acid. This is Protein-glutamate methylesterase/protein-glutamine glutaminase from Azospirillum brasilense.